The primary structure comprises 60 residues: Large ribosomal subunit protein bL33 (60 aa).

This sequence belongs to the bacterial ribosomal protein bL33 family.

The polypeptide is Large ribosomal subunit protein bL33 (Chlorobium luteolum (strain DSM 273 / BCRC 81028 / 2530) (Pelodictyon luteolum)).